The chain runs to 462 residues: Probable peptidoglycan glycosyltransferase FtsW (462 aa).

Residues 1–63 lie on the Cytoplasmic side of the membrane; sequence MGCIVCSDGI…VRDGRKFDAP (63 aa). A helical membrane pass occupies residues 64–84; the sequence is LLWMVVLMTAFGLLMIYSASV. Over 85 to 97 the chain is Periplasmic; it reads YLASKEGGDQFFY. The chain crosses the membrane as a helical span at residues 98–118; that stretch reads LTRQAGFVVAGLIASGFLWFL. Topologically, residues 119–125 are cytoplasmic; that stretch reads CRMRTWR. A helical transmembrane segment spans residues 126–146; that stretch reads RLVPWIFALSGLLLVAVLIAG. Over 147–160 the chain is Periplasmic; sequence REINGATRWIPLGP. A helical membrane pass occupies residues 161–181; sequence LNFQPTELFKLAVILYLASLF. At 182 to 227 the chain is on the cytoplasmic side; the sequence is TRREEVLRSMESLGWQSIWRGTANLIMSATNPQARRETLEMYGRFR. 2 helical membrane-spanning segments follow: residues 228–248 and 249–269; these read AIILPIMLVAFGLVLIMVQPD and FGSFVVITVITVGMLFLAGLP. Residues 270-271 are Cytoplasmic-facing; it reads WK. The chain crosses the membrane as a helical span at residues 272–292; that stretch reads YFFVLVGSVLGGMVLMITAAP. The Periplasmic portion of the chain corresponds to 293–348; it reads YRVQRVVAFLDPWKDPQGAGYQLTHSLMAIGRGEWFGMGLGASLSKRGFLPEAHTD. A helical transmembrane segment spans residues 349-369; sequence FIFAIIAEEFGFFGMCVLIFC. Residues 370-386 lie on the Cytoplasmic side of the membrane; that stretch reads YGWLVVRAFSIGKQSRD. Residues 387-409 form a helical membrane-spanning segment; that stretch reads LGLTFNAYIASGIGIWIGIQSFF. Over 410-424 the chain is Periplasmic; that stretch reads NIGVNIGALPTKGLT. Residues 425 to 445 traverse the membrane as a helical segment; sequence LPLMSYGGSSVFFMLISMMLL. Over 446-462 the chain is Cytoplasmic; the sequence is LRIDYENRRKMRGYRVE.

This sequence belongs to the SEDS family. FtsW subfamily.

It localises to the cell inner membrane. It carries out the reaction [GlcNAc-(1-&gt;4)-Mur2Ac(oyl-L-Ala-gamma-D-Glu-L-Lys-D-Ala-D-Ala)](n)-di-trans,octa-cis-undecaprenyl diphosphate + beta-D-GlcNAc-(1-&gt;4)-Mur2Ac(oyl-L-Ala-gamma-D-Glu-L-Lys-D-Ala-D-Ala)-di-trans,octa-cis-undecaprenyl diphosphate = [GlcNAc-(1-&gt;4)-Mur2Ac(oyl-L-Ala-gamma-D-Glu-L-Lys-D-Ala-D-Ala)](n+1)-di-trans,octa-cis-undecaprenyl diphosphate + di-trans,octa-cis-undecaprenyl diphosphate + H(+). It functions in the pathway cell wall biogenesis; peptidoglycan biosynthesis. In terms of biological role, peptidoglycan polymerase that is essential for cell division. The protein is Probable peptidoglycan glycosyltransferase FtsW of Neisseria gonorrhoeae (strain NCCP11945).